Consider the following 45-residue polypeptide: Parabutoporin (45 aa).

Monomer and homodimer. As to expression, expressed by the venom gland.

It localises to the secreted. The protein resides in the target cell membrane. At high concentrations, acts as a pore former in cellular membranes and causes the leakage of the cells. At submicromolar concentrations, degranulates granulocytes and has a weak hemolytic activity against human red blood cells. Also strongly inhibits the production of superoxide anions. Has a strong antibacterial activity against Gram-negative bacteria but is less active against Gram-positive bacteria. Also has antifungal activity. Induces reversible G-protein dependent Ca(2+) release from intracellular stores and increase Ca(2+) influx in HL-60 cells. Induces the activation of the Rac pathway in granulocytes. Synergistically enhances the excitatory effects of short and long chain ion-channel-specific neurotoxins by interaction with the neuronal membranes. The polypeptide is Parabutoporin (Parabuthus schlechteri (Scorpion)).